The chain runs to 692 residues: UvrABC system protein C (692 aa).

In terms of domain architecture, GIY-YIG spans 16–95 (ETPGVYRFRD…IKEFDPRFNV (80 aa)). In terms of domain architecture, UVR spans 208–243 (GRYLRRLEREMRAAAEAQEYERAARLRDDIGALRRA). The segment at 492–511 (GELEEYPGAPTGDDEAPETG) is disordered.

This sequence belongs to the UvrC family. In terms of assembly, interacts with UvrB in an incision complex.

The protein localises to the cytoplasm. Functionally, the UvrABC repair system catalyzes the recognition and processing of DNA lesions. UvrC both incises the 5' and 3' sides of the lesion. The N-terminal half is responsible for the 3' incision and the C-terminal half is responsible for the 5' incision. The polypeptide is UvrABC system protein C (Parafrankia sp. (strain EAN1pec)).